The sequence spans 222 residues: Ribonuclease 3 (222 aa).

The RNase III domain occupies 5-127; sequence PIKLEKKLKL…LIGAIYLDKG (123 aa). Position 41 (Glu41) interacts with Mg(2+). Asp45 is a catalytic residue. Mg(2+) contacts are provided by Asp113 and Glu116. Glu116 is an active-site residue. A DRBM domain is found at 152–221; that stretch reads DAKTKLQEYS…ASLCLQDIFK (70 aa).

The protein belongs to the ribonuclease III family. Homodimer. The cofactor is Mg(2+).

Its subcellular location is the cytoplasm. The catalysed reaction is Endonucleolytic cleavage to 5'-phosphomonoester.. Its function is as follows. Digests double-stranded RNA. Involved in the processing of primary rRNA transcript to yield the immediate precursors to the large and small rRNAs (23S and 16S). Processes some mRNAs, and tRNAs when they are encoded in the rRNA operon. Processes pre-crRNA and tracrRNA of type II CRISPR loci if present in the organism. The chain is Ribonuclease 3 from Pelagibacter ubique (strain HTCC1062).